The following is a 792-amino-acid chain: MSVAKSIAAVLVALLPGALAQANTSYVDYNVEANPDLTPQSVATIDLSFPDCENGPLSKTLVCDTSARPHDRAAALVSMFTFEELVNNTGNTSPGVPRLGLPPYQVWSEALHGLDRANFTDEGEYSWATSFPMPILTMSALNRTLINQIATIIATQGRAFNNVGRYGLDVYAPNINAFRSAMWGRGQETPGEDAYCLASAYAYEYITGIQGGVDPEHLKLVATAKHYAGYDLENWDGHSRLGNDMNITQQELSEYYTPQFLVAARDAKVHSVMCSYNAVNGVPSCANSFFLQTLLRDTFGFVEDGYVSSDCDSAYNVWNPHEFAANITGAAADSIRAGTDIDCGTTYQYYFGEAFDEQEVTRAEIERGVIRLYSNLVRLGYFDGNGSVYRDLTWNDVVTTDAWNISYEAAVEGIVLLKNDGTLPLAKSVRSVALIGPWMNVTTQLQGNYFGPAPYLISPLNAFQNSDFDVNYAFGTNISSHSTDGFSEALSAAKKSDVIIFAGGIDNTLEAEAMDRMNITWPGNQLQLIDQLSQLGKPLIVLQMGGGQVDSSSLKSNKNVNSLIWGGYPGQSGGQALLDIITGKRAPAGRLVVTQYPAEYATQFPATDMSLRPHGNNPGQTYMWYTGTPVYEFGHGLFYTTFHASLPGTGKDKTSFNIQDLLTQPHPGFANVEQMPLLNFTVTITNTGKVASDYTAMLFANTTAGPAPYPNKWLVGFDRLASLEPHRSQTMTIPVTIDSVARTDEAGNRVLYPGKYELALNNERSVVLQFVLTGREAVVFKWPVEQQQISSA.

An N-terminal signal peptide occupies residues 1–20 (MSVAKSIAAVLVALLPGALA). Residues asparagine 23, asparagine 87, asparagine 118, asparagine 142, and asparagine 246 are each glycosylated (N-linked (GlcNAc...) asparagine). Residue aspartate 310 is part of the active site. N-linked (GlcNAc...) asparagine glycosylation is found at asparagine 326, asparagine 385, asparagine 404, asparagine 440, asparagine 477, asparagine 518, asparagine 679, and asparagine 701.

It belongs to the glycosyl hydrolase 3 family.

Its subcellular location is the secreted. It carries out the reaction Hydrolysis of (1-&gt;4)-beta-D-xylans, to remove successive D-xylose residues from the non-reducing termini.. The protein operates within glycan degradation; xylan degradation. Xylan 1,4-beta-xylosidase involved in the hydrolysis of xylan, a major structural heterogeneous polysaccharide found in plant biomass representing the second most abundant polysaccharide in the biosphere, after cellulose. The polypeptide is Probable exo-1,4-beta-xylosidase xlnD (xlnD) (Aspergillus fumigatus (strain ATCC MYA-4609 / CBS 101355 / FGSC A1100 / Af293) (Neosartorya fumigata)).